The following is a 316-amino-acid chain: Retinol dehydrogenase 12 (316 aa).

Gly-46 to Gly-52 contributes to the NADP(+) binding site. Substrate is bound at residue Ser-175. Residue Tyr-200 is the Proton acceptor of the active site.

Belongs to the short-chain dehydrogenases/reductases (SDR) family. As to expression, expressed in the inner segments of the photoreceptor in retina.

It carries out the reaction all-trans-retinol + NADP(+) = all-trans-retinal + NADPH + H(+). The catalysed reaction is 11-cis-retinol + NADP(+) = 11-cis-retinal + NADPH + H(+). The enzyme catalyses 9-cis-retinol + NADP(+) = 9-cis-retinal + NADPH + H(+). It catalyses the reaction a 4-hydroxynonen-1-ol + NADP(+) = a 4-hydroxynonenal + NADPH + H(+). It carries out the reaction (E)-non-2-en-1-ol + NADP(+) = (E)-non-2-enal + NADPH + H(+). The catalysed reaction is (Z)-non-6-en-1-ol + NADP(+) = (Z)-non-6-enal + NADPH + H(+). The enzyme catalyses nonan-1-ol + NADP(+) = nonanal + NADPH + H(+). Its pathway is cofactor metabolism; retinol metabolism. Its function is as follows. Retinoids dehydrogenase/reductase with a clear preference for NADP. Displays high activity towards 9-cis, 11-cis and all-trans-retinal. Shows very weak activity toward 13-cis-retinol. Also exhibits activity, albeit with lower affinity than for retinaldehydes, towards lipid peroxidation products (C9 aldehydes) such as 4-hydroxynonenal and trans-2-nonenal. Plays an important function in photoreceptor cells to detoxify 4-hydroxynonenal and potentially other toxic aldehyde products resulting from lipid peroxidation. Has no dehydrogenase activity towards steroids. The chain is Retinol dehydrogenase 12 (Rdh12) from Mus musculus (Mouse).